The sequence spans 268 residues: Calpain small subunit 1 (268 aa).

Methionine 1 bears the N-acetylmethionine mark. Phosphoserine is present on serine 6. The 35-residue stretch at 96-130 (EEVRQFRKLFVQLAGDDMEVSATELMNILNKVVTR) folds into the EF-hand 1; atypical domain. Residues alanine 109, aspartate 112, glutamate 114, glutamate 119, aspartate 137, aspartate 152, aspartate 154, threonine 156, lysine 158, and glutamate 163 each contribute to the Ca(2+) site. EF-hand domains are found at residues 139-172 (FGID…NNIK), 169-204 (NNIK…AGFH), 205-233 (LNEH…ISCL), and 234-268 (VRLD…TMYS). Lysine 179 is subject to N6-acetyllysine. Ca(2+)-binding residues include aspartate 182, aspartate 184, serine 186, threonine 188, glutamate 193, and aspartate 225.

As to quaternary structure, homodimer or heterodimer of a large (catalytic) and a small (regulatory) subunit. In presence of calcium, the heterodimer dissociates.

It localises to the cytoplasm. The protein resides in the cell membrane. Regulatory subunit of the calcium-regulated non-lysosomal thiol-protease which catalyzes limited proteolysis of substrates involved in cytoskeletal remodeling and signal transduction. Essential for embryonic development. The sequence is that of Calpain small subunit 1 (Capns1) from Mus musculus (Mouse).